Reading from the N-terminus, the 150-residue chain is Large ribosomal subunit protein bL9 (150 aa).

Belongs to the bacterial ribosomal protein bL9 family.

Functionally, binds to the 23S rRNA. This is Large ribosomal subunit protein bL9 from Aromatoleum aromaticum (strain DSM 19018 / LMG 30748 / EbN1) (Azoarcus sp. (strain EbN1)).